Here is a 259-residue protein sequence, read N- to C-terminus: Potassium/proton antiporter CemA (259 aa).

The next 4 helical transmembrane spans lie at 47 to 67 (CLLV…EPWV), 136 to 156 (IITH…YLVM), 184 to 204 (ILLA…ELLI), and 219 to 239 (IISS…KYWI).

It belongs to the CemA family.

The protein resides in the plastid. Its subcellular location is the chloroplast inner membrane. It carries out the reaction K(+)(in) + H(+)(out) = K(+)(out) + H(+)(in). Functionally, contributes to K(+)/H(+) antiport activity by supporting proton efflux to control proton extrusion and homeostasis in chloroplasts in a light-dependent manner to modulate photosynthesis. Prevents excessive induction of non-photochemical quenching (NPQ) under continuous-light conditions. Indirectly promotes efficient inorganic carbon uptake into chloroplasts. This Welwitschia mirabilis (Tree tumbo) protein is Potassium/proton antiporter CemA.